The sequence spans 158 residues: Crossover junction endodeoxyribonuclease RuvC (158 aa).

Active-site residues include D7, E66, and D139. Mg(2+) contacts are provided by D7, E66, and D139.

This sequence belongs to the RuvC family. As to quaternary structure, homodimer which binds Holliday junction (HJ) DNA. The HJ becomes 2-fold symmetrical on binding to RuvC with unstacked arms; it has a different conformation from HJ DNA in complex with RuvA. In the full resolvosome a probable DNA-RuvA(4)-RuvB(12)-RuvC(2) complex forms which resolves the HJ. Requires Mg(2+) as cofactor.

Its subcellular location is the cytoplasm. The enzyme catalyses Endonucleolytic cleavage at a junction such as a reciprocal single-stranded crossover between two homologous DNA duplexes (Holliday junction).. Functionally, the RuvA-RuvB-RuvC complex processes Holliday junction (HJ) DNA during genetic recombination and DNA repair. Endonuclease that resolves HJ intermediates. Cleaves cruciform DNA by making single-stranded nicks across the HJ at symmetrical positions within the homologous arms, yielding a 5'-phosphate and a 3'-hydroxyl group; requires a central core of homology in the junction. The consensus cleavage sequence is 5'-(A/T)TT(C/G)-3'. Cleavage occurs on the 3'-side of the TT dinucleotide at the point of strand exchange. HJ branch migration catalyzed by RuvA-RuvB allows RuvC to scan DNA until it finds its consensus sequence, where it cleaves and resolves the cruciform DNA. The chain is Crossover junction endodeoxyribonuclease RuvC from Nitratiruptor sp. (strain SB155-2).